Consider the following 372-residue polypeptide: Queuine tRNA-ribosyltransferase (372 aa).

Asp92 acts as the Proton acceptor in catalysis. Residues 92–96 (DSGGY), Asp146, Gln188, and Gly215 each bind substrate. The RNA binding stretch occupies residues 246–252 (GIGSLRE). Asp265 serves as the catalytic Nucleophile. Residues 270 to 274 (TRLGR) form an RNA binding; important for wobble base 34 recognition region. Zn(2+) contacts are provided by Cys303, Cys305, Cys308, and His334.

This sequence belongs to the queuine tRNA-ribosyltransferase family. As to quaternary structure, homodimer. Within each dimer, one monomer is responsible for RNA recognition and catalysis, while the other monomer binds to the replacement base PreQ1. Zn(2+) serves as cofactor.

It carries out the reaction 7-aminomethyl-7-carbaguanine + guanosine(34) in tRNA = 7-aminomethyl-7-carbaguanosine(34) in tRNA + guanine. Its pathway is tRNA modification; tRNA-queuosine biosynthesis. Functionally, catalyzes the base-exchange of a guanine (G) residue with the queuine precursor 7-aminomethyl-7-deazaguanine (PreQ1) at position 34 (anticodon wobble position) in tRNAs with GU(N) anticodons (tRNA-Asp, -Asn, -His and -Tyr). Catalysis occurs through a double-displacement mechanism. The nucleophile active site attacks the C1' of nucleotide 34 to detach the guanine base from the RNA, forming a covalent enzyme-RNA intermediate. The proton acceptor active site deprotonates the incoming PreQ1, allowing a nucleophilic attack on the C1' of the ribose to form the product. After dissociation, two additional enzymatic reactions on the tRNA convert PreQ1 to queuine (Q), resulting in the hypermodified nucleoside queuosine (7-(((4,5-cis-dihydroxy-2-cyclopenten-1-yl)amino)methyl)-7-deazaguanosine). This chain is Queuine tRNA-ribosyltransferase, found in Prochlorococcus marinus (strain MIT 9211).